We begin with the raw amino-acid sequence, 196 residues long: Putative NADH dehydrogenase/NAD(P)H nitroreductase Reut_A1586 (196 aa).

This sequence belongs to the nitroreductase family. HadB/RutE subfamily. The cofactor is FMN.

This chain is Putative NADH dehydrogenase/NAD(P)H nitroreductase Reut_A1586, found in Cupriavidus pinatubonensis (strain JMP 134 / LMG 1197) (Cupriavidus necator (strain JMP 134)).